The following is a 385-amino-acid chain: 8-amino-7-oxononanoate synthase (385 aa).

Residue arginine 21 coordinates substrate. 108-109 (GF) is a pyridoxal 5'-phosphate binding site. Residue histidine 133 coordinates substrate. Pyridoxal 5'-phosphate-binding residues include serine 179, histidine 207, and threonine 233. Position 236 is an N6-(pyridoxal phosphate)lysine (lysine 236). Threonine 352 contributes to the substrate binding site.

Belongs to the class-II pyridoxal-phosphate-dependent aminotransferase family. BioF subfamily. In terms of assembly, homodimer. It depends on pyridoxal 5'-phosphate as a cofactor.

It carries out the reaction 6-carboxyhexanoyl-[ACP] + L-alanine + H(+) = (8S)-8-amino-7-oxononanoate + holo-[ACP] + CO2. It participates in cofactor biosynthesis; biotin biosynthesis. Its function is as follows. Catalyzes the decarboxylative condensation of pimeloyl-[acyl-carrier protein] and L-alanine to produce 8-amino-7-oxononanoate (AON), [acyl-carrier protein], and carbon dioxide. This is 8-amino-7-oxononanoate synthase from Salmonella schwarzengrund (strain CVM19633).